The chain runs to 495 residues: Adenosylhomocysteinase (495 aa).

Substrate contacts are provided by Thr-71, Asp-156, and Glu-218. Residue 219–221 coordinates NAD(+); that stretch reads TTT. Substrate-binding residues include Lys-248 and Asp-252. NAD(+)-binding positions include Asn-253, 282–287, Glu-305, Asn-340, 361–363, and Asn-409; these read GYGDVG and IGH.

It belongs to the adenosylhomocysteinase family. Requires NAD(+) as cofactor.

The protein localises to the cytoplasm. The catalysed reaction is S-adenosyl-L-homocysteine + H2O = L-homocysteine + adenosine. The protein operates within amino-acid biosynthesis; L-homocysteine biosynthesis; L-homocysteine from S-adenosyl-L-homocysteine: step 1/1. Functionally, may play a key role in the regulation of the intracellular concentration of adenosylhomocysteine. The protein is Adenosylhomocysteinase of Mycobacterium tuberculosis (strain ATCC 25177 / H37Ra).